Consider the following 179-residue polypeptide: Ribosome maturation factor RimM (179 aa).

Residues 99-174 enclose the PRC barrel domain; the sequence is EEDEYYFDQI…IMIVDLPEGL (76 aa).

It belongs to the RimM family. As to quaternary structure, binds ribosomal protein uS19.

The protein localises to the cytoplasm. Functionally, an accessory protein needed during the final step in the assembly of 30S ribosomal subunit, possibly for assembly of the head region. Essential for efficient processing of 16S rRNA. May be needed both before and after RbfA during the maturation of 16S rRNA. It has affinity for free ribosomal 30S subunits but not for 70S ribosomes. The protein is Ribosome maturation factor RimM of Natranaerobius thermophilus (strain ATCC BAA-1301 / DSM 18059 / JW/NM-WN-LF).